The following is a 604-amino-acid chain: Glutamyl-tRNA(Gln) amidotransferase subunit B, mitochondrial (604 aa).

A mitochondrion-targeting transit peptide spans 1 to 48 (MIRQCLSRRGAYSRYRLAARGVELAEPFHHQSSRPQGRRNWSSSPRCS). The interval 28-57 (FHHQSSRPQGRRNWSSSPRCSLDIRTDTPR) is disordered. Polar residues predominate over residues 33–46 (SRPQGRRNWSSSPR).

Belongs to the GatB/GatE family. GatB subfamily. In terms of assembly, subunit of the heterotrimeric GatCAB amidotransferase (AdT) complex, composed of A, B and C subunits.

Its subcellular location is the mitochondrion. The enzyme catalyses L-glutamyl-tRNA(Gln) + L-glutamine + ATP + H2O = L-glutaminyl-tRNA(Gln) + L-glutamate + ADP + phosphate + H(+). Allows the formation of correctly charged Gln-tRNA(Gln) through the transamidation of misacylated Glu-tRNA(Gln) in the mitochondria. The reaction takes place in the presence of glutamine and ATP through an activated gamma-phospho-Glu-tRNA(Gln). In Blastomyces gilchristii (strain SLH14081) (Blastomyces dermatitidis), this protein is Glutamyl-tRNA(Gln) amidotransferase subunit B, mitochondrial.